We begin with the raw amino-acid sequence, 1163 residues long: Genome polyprotein (1163 aa).

Topologically, residues 1–104 (MSGRKAQGKT…LSSRKRRSYE (104 aa)) are cytoplasmic. The segment at 38-72 (PGPSRGVQGFIFFFLFNVLTGRKITAHLKKLWRML) is hydrophobic; homodimerization of capsid protein C. Residues 102 to 121 (SYEVLTVQFLILGMLLMTGG) constitute a propeptide, ER anchor for the capsid protein C, removed in mature form by serine protease NS3. Residues 105–125 (VLTVQFLILGMLLMTGGVTLV) form a helical membrane-spanning segment. The Extracellular segment spans residues 126–244 (RKSRWLLLNV…GERQLQKIER (119 aa)). N-linked (GlcNAc...) asparagine; by host glycosylation is found at Asn-134 and Asn-150. Residues 245-265 (WLVRNPFFAVTALAIAYLVGS) form a helical membrane-spanning segment. Residues 266–270 (NMTQR) lie on the Cytoplasmic side of the membrane. A helical transmembrane segment spans residues 271–285 (VVIALLVLAVGPAYS). Topologically, residues 286–730 (AHCIGITDRD…MVFGSAFQGL (445 aa)) are extracellular. Disulfide bonds link Cys-288/Cys-315, Cys-345/Cys-406, Cys-359/Cys-390, Cys-377/Cys-401, Cys-467/Cys-568, and Cys-585/Cys-615. Residues 383-396 (DRGWGNGCGLFGKG) form a fusion peptide region. The chain crosses the membrane as a helical span at residues 731–751 (FGGLSWITKVIMGAVLIWVGI). Residues 752 to 757 (NMRNMT) are Extracellular-facing. A helical transmembrane segment spans residues 758–778 (MSMSMILVGVIMMFLSLGVGA). Over 779–1163 (DQGCAINFGK…RQGPKQILVG (385 aa)) the chain is Extracellular. Intrachain disulfides connect Cys-782-Cys-793, Cys-833-Cys-921, Cys-957-Cys-1002, Cys-1058-Cys-1107, Cys-1069-Cys-1091, and Cys-1090-Cys-1094. Asn-908 and Asn-986 each carry an N-linked (GlcNAc...) asparagine; by host glycan.

As to quaternary structure, homodimer. Interacts (via N-terminus) with host EXOC1 (via C-terminus); this interaction results in EXOC1 degradation through the proteasome degradation pathway. In terms of assembly, forms heterodimers with envelope protein E in the endoplasmic reticulum and Golgi. Homodimer; in the endoplasmic reticulum and Golgi. As to quaternary structure, homodimer; Homohexamer when secreted. Interacts with envelope protein E. Specific enzymatic cleavages in vivo yield mature proteins. The nascent capsid protein C contains a C-terminal hydrophobic domain that act as a signal sequence for translocation of prM into the lumen of the ER. Mature capsid protein C is cleaved at a site upstream of this hydrophobic domain by NS3. prM is cleaved in post-Golgi vesicles by a host furin, releasing the mature small envelope protein M, and peptide pr. Non-structural protein 2A-alpha, a C-terminally truncated form of non-structural protein 2A, results from partial cleavage by NS3. Specific enzymatic cleavages in vivo yield mature proteins peptide 2K acts as a signal sequence and is removed from the N-terminus of NS4B by the host signal peptidase in the ER lumen. Signal cleavage at the 2K-4B site requires a prior NS3 protease-mediated cleavage at the 4A-2K site. Post-translationally, cleaved in post-Golgi vesicles by a host furin, releasing the mature small envelope protein M, and peptide pr. This cleavage is incomplete as up to 30% of viral particles still carry uncleaved prM. In terms of processing, N-glycosylated. N-glycosylated. The excreted form is glycosylated and this is required for efficient secretion of the protein from infected cells.

Its subcellular location is the virion. The protein resides in the host nucleus. The protein localises to the host cytoplasm. It is found in the host perinuclear region. It localises to the secreted. Its subcellular location is the virion membrane. The protein resides in the host endoplasmic reticulum membrane. In terms of biological role, plays a role in virus budding by binding to the cell membrane and gathering the viral RNA into a nucleocapsid that forms the core of a mature virus particle. During virus entry, may induce genome penetration into the host cytoplasm after hemifusion induced by the surface proteins. Can migrate to the cell nucleus where it modulates host functions. Its function is as follows. Inhibits RNA silencing by interfering with host Dicer. Prevents premature fusion activity of envelope proteins in trans-Golgi by binding to envelope protein E at pH6.0. After virion release in extracellular space, gets dissociated from E dimers. Functionally, acts as a chaperone for envelope protein E during intracellular virion assembly by masking and inactivating envelope protein E fusion peptide. prM is the only viral peptide matured by host furin in the trans-Golgi network probably to avoid catastrophic activation of the viral fusion activity in acidic Golgi compartment prior to virion release. prM-E cleavage is inefficient, and many virions are only partially matured. These uncleaved prM would play a role in immune evasion. In terms of biological role, may play a role in virus budding. Exerts cytotoxic effects by activating a mitochondrial apoptotic pathway through M ectodomain. May display a viroporin activity. Its function is as follows. Binds to host cell surface receptor and mediates fusion between viral and cellular membranes. Envelope protein is synthesized in the endoplasmic reticulum in the form of heterodimer with protein prM. They play a role in virion budding in the ER, and the newly formed immature particle is covered with 60 spikes composed of heterodimer between precursor prM and envelope protein E. The virion is transported to the Golgi apparatus where the low pH causes dissociation of PrM-E heterodimers and formation of E homodimers. prM-E cleavage is inefficient, and many virions are only partially matured. These uncleaved prM would play a role in immune evasion. Involved in immune evasion, pathogenesis and viral replication. Once cleaved off the polyprotein, is targeted to three destinations: the viral replication cycle, the plasma membrane and the extracellular compartment. Essential for viral replication. Required for formation of the replication complex and recruitment of other non-structural proteins to the ER-derived membrane structures. Excreted as a hexameric lipoparticle that plays a role against host immune response. Antagonizing the complement function. Binds to the host macrophages and dendritic cells. Inhibits signal transduction originating from Toll-like receptor 3 (TLR3). Functionally, component of the viral RNA replication complex that functions in virion assembly and antagonizes the host immune response. In Aedes aegypti (Yellowfever mosquito), this protein is Genome polyprotein.